A 251-amino-acid chain; its full sequence is Probable transcriptional regulatory protein DET0444 (251 aa).

The protein belongs to the TACO1 family.

The protein resides in the cytoplasm. The chain is Probable transcriptional regulatory protein DET0444 from Dehalococcoides mccartyi (strain ATCC BAA-2266 / KCTC 15142 / 195) (Dehalococcoides ethenogenes (strain 195)).